Reading from the N-terminus, the 160-residue chain is UPF0479 membrane protein YER190C-B (160 aa).

2 helical membrane-spanning segments follow: residues 39–59 (IVFC…KVLQ) and 136–156 (VPMI…ISQH).

The protein belongs to the UPF0479 family.

The protein localises to the membrane. This is UPF0479 membrane protein YER190C-B from Saccharomyces cerevisiae (strain ATCC 204508 / S288c) (Baker's yeast).